The sequence spans 362 residues: Chorismate synthase (362 aa).

Positions 48 and 54 each coordinate NADP(+). FMN contacts are provided by residues 131-133 (RSS), 243-244 (NA), Gly-287, 302-306 (KPTSS), and Arg-328.

The protein belongs to the chorismate synthase family. Homotetramer. FMNH2 is required as a cofactor.

The catalysed reaction is 5-O-(1-carboxyvinyl)-3-phosphoshikimate = chorismate + phosphate. Its pathway is metabolic intermediate biosynthesis; chorismate biosynthesis; chorismate from D-erythrose 4-phosphate and phosphoenolpyruvate: step 7/7. Its function is as follows. Catalyzes the anti-1,4-elimination of the C-3 phosphate and the C-6 proR hydrogen from 5-enolpyruvylshikimate-3-phosphate (EPSP) to yield chorismate, which is the branch point compound that serves as the starting substrate for the three terminal pathways of aromatic amino acid biosynthesis. This reaction introduces a second double bond into the aromatic ring system. In Rhodopseudomonas palustris (strain ATCC BAA-98 / CGA009), this protein is Chorismate synthase.